The sequence spans 126 residues: Aspartate 1-decarboxylase (126 aa).

Ser25 (schiff-base intermediate with substrate; via pyruvic acid) is an active-site residue. Ser25 carries the pyruvic acid (Ser) modification. Thr57 contributes to the substrate binding site. The active-site Proton donor is the Tyr58. 73 to 75 (GGA) is a binding site for substrate.

This sequence belongs to the PanD family. In terms of assembly, heterooctamer of four alpha and four beta subunits. Requires pyruvate as cofactor. In terms of processing, is synthesized initially as an inactive proenzyme, which is activated by self-cleavage at a specific serine bond to produce a beta-subunit with a hydroxyl group at its C-terminus and an alpha-subunit with a pyruvoyl group at its N-terminus.

The protein localises to the cytoplasm. It catalyses the reaction L-aspartate + H(+) = beta-alanine + CO2. The protein operates within cofactor biosynthesis; (R)-pantothenate biosynthesis; beta-alanine from L-aspartate: step 1/1. Catalyzes the pyruvoyl-dependent decarboxylation of aspartate to produce beta-alanine. This chain is Aspartate 1-decarboxylase, found in Stenotrophomonas maltophilia (strain R551-3).